The sequence spans 216 residues: 3-keto-L-gulonate-6-phosphate decarboxylase UlaD (216 aa).

D11 is a substrate binding site. Mg(2+)-binding residues include E33 and D62. Position 192 (R192) interacts with substrate.

It belongs to the HPS/KGPDC family. KGPDC subfamily. Homodimer. Mg(2+) is required as a cofactor.

The catalysed reaction is 3-dehydro-L-gulonate 6-phosphate + H(+) = L-xylulose 5-phosphate + CO2. Its pathway is cofactor degradation; L-ascorbate degradation; D-xylulose 5-phosphate from L-ascorbate: step 2/4. Its function is as follows. Catalyzes the decarboxylation of 3-keto-L-gulonate-6-P into L-xylulose-5-P. Is involved in the anaerobic L-ascorbate utilization. The chain is 3-keto-L-gulonate-6-phosphate decarboxylase UlaD from Escherichia coli O139:H28 (strain E24377A / ETEC).